The following is a 374-amino-acid chain: Tetraacyldisaccharide 4'-kinase (374 aa).

66–73 (TAGGTGKT) contributes to the ATP binding site.

It belongs to the LpxK family.

The catalysed reaction is a lipid A disaccharide + ATP = a lipid IVA + ADP + H(+). Its pathway is glycolipid biosynthesis; lipid IV(A) biosynthesis; lipid IV(A) from (3R)-3-hydroxytetradecanoyl-[acyl-carrier-protein] and UDP-N-acetyl-alpha-D-glucosamine: step 6/6. Functionally, transfers the gamma-phosphate of ATP to the 4'-position of a tetraacyldisaccharide 1-phosphate intermediate (termed DS-1-P) to form tetraacyldisaccharide 1,4'-bis-phosphate (lipid IVA). This chain is Tetraacyldisaccharide 4'-kinase, found in Syntrophus aciditrophicus (strain SB).